The sequence spans 146 residues: uncharacterized protein (146 aa).

Residues Val7–Leu24 form a helical membrane-spanning segment.

Its subcellular location is the membrane. This is an uncharacterized protein from Haemophilus influenzae (strain ATCC 51907 / DSM 11121 / KW20 / Rd).